The sequence spans 3966 residues: Histone-lysine N-methyltransferase 2A (3966 aa).

Disordered regions lie at residues 1-106 (MAHS…LLRV) and 130-231 (VFGE…GVKI). The short motif at 6-25 (RWRFPARPGTTGGGGGGGRR) is the Menin-binding motif (MBM) element. Over residues 15–29 (TTGGGGGGGRRGLGG) the composition is skewed to gly residues. Residues 75 to 102 (GAAAASAASSSSASSSSSSSSSASSGPA) are compositionally biased toward low complexity. The Integrase domain-binding motif 1 (IBM1) signature appears at 121–132 (GTNLRRFRAVFG). Residues Ser134 and Ser140 each carry the phosphoserine; by CK2 modification. The Integrase domain-binding motif 2 (IBM2) signature appears at 145–150 (QFLGFG). Ser151 is modified (phosphoserine). Positions 167–178 (KASPRKPRGRPR) form a DNA-binding region, a.T hook 1. Ser195 is modified (phosphoserine). The span at 200–218 (SETKSADKIKKKDSKSIEK) shows a compositional bias: basic and acidic residues. A DNA-binding region (a.T hook 2) is located at residues 215 to 225 (SIEKKRGRPPT). Position 237 is an N6-acetyllysine (Lys237). Positions 299–307 (RRRGRPPST) form a DNA-binding region, a.T hook 3. The segment at 322-343 (LEKPQKVRKDKEGTPPLTKEDK) is disordered. The residue at position 371 (Lys371) is an N6-acetyllysine. Positions 440-590 (RLESTPNSRF…PWLMPPTIPL (151 aa)) are disordered. Residues 450–489 (SATSCGSSEKSSAASQHSSQMSSDSSRSSSPSIDTTSDSQ) show a composition bias toward low complexity. A Phosphoserine modification is found at Ser516. Over residues 544 to 557 (LPTLQSAPQQQTSS) the composition is skewed to low complexity. Residues 558 to 571 (SPPPPLLTPPPPLQ) are compositionally biased toward pro residues. An N6-acetyllysine modification is found at Lys634. Ser678 carries the phosphoserine modification. Disordered regions lie at residues 711 to 943 (ESVT…ADVA), 963 to 1003 (RGNL…TSSI), 1034 to 1064 (IEKSKSLKQTDQPKAQGQESDSSETSVRGPR), and 1101 to 1161 (ILSS…CQVP). Composition is skewed to low complexity over residues 717 to 730 (SNRTSSGASSSGVS) and 760 to 790 (LSTSELSPLTPPSSVSSSLSIPVSPLAASAL). 2 stretches are compositionally biased toward polar residues: residues 791–806 (NPTFTFPSHSLTQSGE) and 817–830 (QTSALAEPFSSNSP). Phosphothreonine is present on Thr837. Basic and acidic residues predominate over residues 843–887 (EKGRKKDTAPEELSKDRDADKSVEKDKSRERDREREKENKRESRK). Residue Ser923 is modified to Phosphoserine. Residues 989-1003 (SAPSSSTVKHSTSSI) are compositionally biased toward low complexity. Positions 1040-1059 (LKQTDQPKAQGQESDSSETS) are enriched in polar residues. Ser1053 carries the phosphoserine modification. The segment covering 1101 to 1111 (ILSSMGNDDKS) has biased composition (basic and acidic residues). At Lys1127 the chain carries N6-acetyllysine. A CXXC-type zinc finger spans residues 1144–1192 (KKGRRSRRCGQCPGCQVPEDCGICTNCLDKPKFGGRNIKKQCCKMRKCQ). The Zn(2+) site is built by Cys1152, Cys1155, Cys1158, Cys1164, Cys1167, Cys1170, Cys1186, and Cys1191. Residues 1196–1390 (WMPSKASLQK…PLSNGISSKQ (195 aa)) form a disordered region. Over residues 1217–1229 (SKTTEKKESKEST) the composition is skewed to basic and acidic residues. Low complexity predominate over residues 1230 to 1241 (AVKSPLEPAQKA). Lys1232 carries the N6-acetyllysine modification. Residues 1245–1270 (PREEPAPKKSSSEPPPRKPVEEKSEE) are compositionally biased toward basic and acidic residues. Positions 1369-1390 (KQENAGTLNILNPLSNGISSKQ) are enriched in polar residues. 3 PHD-type zinc fingers span residues 1430–1481 (RVVC…CKFC), 1478–1532 (CKFC…CVRC), and 1565–1629 (GNFC…CTER). The tract at residues 1583–1599 (KMMQCGKCDRWVHSKCE) is interaction with histone H3K4me3. In terms of domain architecture, Bromo spans 1637-1767 (ALEKELQASL…SFFIRQMERV (131 aa)). Disordered stretches follow at residues 1665-1714 (YRQA…EGVK) and 1807-1870 (WQER…PGID). Positions 1828–1849 (APKPKGPGEPDSPTPLHPPTPP) are enriched in pro residues. Ser1839 carries the phosphoserine modification. Thr1847 bears the Phosphothreonine mark. A Phosphoserine modification is found at Ser1860. The C2HC pre-PHD-type zinc finger occupies 1872–1912 (NRQCALCLMYGDDSANDAGRLLYIGQNEWTHVNCALWSAEV). The segment at 1933-1980 (LRCEFCQKPGATVGCCLTSCTSNYHFMCSRAKNCVFLDDKKVYCQRHR) adopts a PHD-type 4 zinc-finger fold. Residues 2020-2076 (NIHMMIGSMTIDCLGILNDLSDCEDKLFPIGYQCSRVYWSTTDARKRCVYTCKIMEC) enclose the FYR N-terminal domain. Ser2100 carries the phosphoserine modification. Residues 2147-2174 (RTPSYSPTQRSPGCRPLPSAGSPTPTTH) are disordered. Thr2148 bears the Phosphothreonine mark. A phosphoserine mark is found at Ser2152 and Ser2202. Disordered regions lie at residues 2214–2339 (VRTG…ATPG), 2371–2619 (RGQR…SARA), 2639–2673 (EDIPFYSNSTGKKRGKRSAEGQVDGADDLSTSDED), and 2709–2759 (KISQ…DAGE). Residues 2218-2230 (SAYSRSSVSSVPS) show a composition bias toward low complexity. Composition is skewed to polar residues over residues 2250–2284 (LSSSANLGHSAPPSSSSQRTVGGSKTSHLDGSSPS) and 2308–2320 (TSSSKSTDGSAHS). Basic and acidic residues-rich tracts occupy residues 2411–2422 (ILHEHIGSSSRD) and 2430–2440 (SSKETCKEKHS). Residues 2498–2509 (GQSTQVEGSSKE) show a composition bias toward polar residues. Residue Lys2524 forms a Glycyl lysine isopeptide (Lys-Gly) (interchain with G-Cter in SUMO2) linkage. A compositionally biased stretch (polar residues) spans 2528–2537 (ENQSKNTQKE). Ser2560 is subject to Phosphoserine. The span at 2569–2588 (PSPNNTLSQDPQSNNYQNLP) shows a compositional bias: polar residues. Ser2607 carries the post-translational modification Phosphoserine. Residues 2609-2618 (KRRYPRRSAR) are compositionally biased toward basic residues. Acidic residues predominate over residues 2663–2673 (GADDLSTSDED). Polar residues predominate over residues 2722–2737 (SDTSVTATSRKSSQIP). Residues 2740–2759 (NGKENGTENLKIDRPEDAGE) show a composition bias toward basic and acidic residues. Phosphoserine is present on Ser2792. The 9aaTAD signature appears at 2843–2851 (SDIMDFVLK). Position 2951 is a phosphoserine (Ser2951). Position 2954 is an N6-acetyllysine (Lys2954). 2 disordered regions span residues 2958-3060 (ITEK…NAAV) and 3164-3239 (AAQS…PSNI). Residues 3012-3025 (HGNSQDLTRNSGTP) are compositionally biased toward polar residues. At Ser3032 the chain carries Phosphoserine. Over residues 3035 to 3060 (VPVQNQKYVPSSTDSPGPSQISNAAV) the composition is skewed to polar residues. Residues 3167–3178 (SSFPPNISSPPS) are compositionally biased toward low complexity. A compositionally biased stretch (polar residues) spans 3196-3212 (EANQRTDLTTTVATPSS). A compositionally biased stretch (basic residues) spans 3214–3229 (LKKRPISRLHTRKNKK). A Phosphothreonine modification is found at Thr3369. Lys3459 carries the post-translational modification N6-acetyllysine. The interval 3462–3640 (TLTSQRDRDP…AMEEEESGFS (179 aa)) is disordered. Residues 3475-3487 (PGTQPSNFTQTAE) are compositionally biased toward polar residues. Positions 3501–3528 (PSAKPASSASPGSSPSSGQQSGSSSVPG) are enriched in low complexity. Residues Ser3510 and Ser3523 each carry the phosphoserine modification. Positions 3558 to 3570 (TSSEAHIPHRDTD) are enriched in basic and acidic residues. Residues 3663–3744 (KKGLVFEISS…KHCRNYKFRF (82 aa)) enclose the FYR C-terminal domain. The WDR5 interaction motif (WIN) signature appears at 3759–3764 (GSARAE). The segment at 3782–3805 (HRQPPEYNPNDEEEEEVQLKSARR) is disordered. An SET domain is found at 3826–3942 (EAVGVYRSPI…RGEELTYDYK (117 aa)). S-adenosyl-L-methionine is bound by residues His3836 and Arg3838. Position 3879 is an S-methylcysteine; by autocatalysis (Cys3879). S-adenosyl-L-methionine-binding positions include Tyr3880 and 3903–3904 (NH). Residues Cys3906 and Cys3954 each coordinate Zn(2+). The 17-residue stretch at 3950-3966 (NKLPCNCGAKKCRKFLN) folds into the Post-SET domain. Asn3955 serves as a coordination point for S-adenosyl-L-methionine. Zn(2+) is bound by residues Cys3956 and Cys3961.

Belongs to the class V-like SAM-binding methyltransferase superfamily. Histone-lysine methyltransferase family. TRX/MLL subfamily. MLL cleavage product N320 heterodimerizes with MLL cleavage product C180 (via SET and FYRC domains). Component of some MLL1/MLL complex, at least composed of the core components KMT2A/MLL1, ASH2L, HCFC1/HCF1, HCFC2, WDR5, DPY30 and RBBP5, as well as the facultative components BACC1, CHD8, E2F6, HSP70, INO80C, KANSL1, LAS1L, MAX, MCRS1, MEN1, MGA, KAT8/MOF, PELP1, PHF20, PRP31, RING2, RUVB1/TIP49A, RUVB2/TIP49B, SENP3, TAF1, TAF4, TAF6, TAF7, TAF9 and TEX10. Interacts (via WIN motif) with WDR5; the interaction is direct. Interaction with WDR5 is required for stable interaction with ASH2L and RBBP5, and thereby also for optimal histone methyltransferase activity. Interacts with KAT8/MOF; the interaction is direct. Interacts with SBF1 and PPP1R15A. Interacts with ZNF335. Interacts with CLOCK and BMAL1 in a circadian manner. Interacts with PPIE; this results in decreased histone H3 methyltransferase activity. Interacts with CREBBP. Interacts with the WRAD complex composed of WDR5, RBBP5, ASH2L and DPY30. Interacts (via MBM motif) with MEN1. Interacts (via IBM motifs) with PSIP1 (via IBD domain) with moderate affinity whereas the KMT2A-MEN1 complex interacts with a greater affinity; MEN1 enhances interaction of KMT2A with PSIP1. Phosphorylation increases its affinity for PSIP1. Forms a complex with CREBBP and CREB1. Proteolytic cleavage by TASP1 generates MLL cleavage 3product N320 and MLL cleavage product C180, which reassemble through a non-covalent association. 2 cleavage sites exist, cleavage site 1 (CS1) and cleavage site 2 (CS2), to generate MLL cleavage products N320 and C180. CS2 is the major site. Post-translationally, phosphorylation increases its interaction with PSIP1. In terms of processing, auto-methylated at Cys-3879: auto-methylation is inhibited by the WRAD complex and unmodified histone H3.

It localises to the nucleus. It catalyses the reaction L-lysyl(4)-[histone H3] + S-adenosyl-L-methionine = N(6)-methyl-L-lysyl(4)-[histone H3] + S-adenosyl-L-homocysteine + H(+). The enzyme catalyses N(6)-methyl-L-lysyl(4)-[histone H3] + S-adenosyl-L-methionine = N(6),N(6)-dimethyl-L-lysyl(4)-[histone H3] + S-adenosyl-L-homocysteine + H(+). The catalysed reaction is L-cysteinyl-[protein] + S-adenosyl-L-methionine = S-methyl-L-cysteinyl-[protein] + S-adenosyl-L-homocysteine + H(+). In terms of biological role, histone methyltransferase that plays an essential role in early development and hematopoiesis. Catalytic subunit of the MLL1/MLL complex, a multiprotein complex that mediates both methylation of 'Lys-4' of histone H3 (H3K4me) complex and acetylation of 'Lys-16' of histone H4 (H4K16ac). Catalyzes methyl group transfer from S-adenosyl-L-methionine to the epsilon-amino group of 'Lys-4' of histone H3 (H3K4) via a non-processive mechanism. Part of chromatin remodeling machinery predominantly forms H3K4me1 and H3K4me2 methylation marks at active chromatin sites where transcription and DNA repair take place. Has weak methyltransferase activity by itself, and requires other component of the MLL1/MLL complex to obtain full methyltransferase activity. Has no activity toward histone H3 phosphorylated on 'Thr-3', less activity toward H3 dimethylated on 'Arg-8' or 'Lys-9', while it has higher activity toward H3 acetylated on 'Lys-9'. Binds to unmethylated CpG elements in the promoter of target genes and helps maintain them in the nonmethylated state. Required for transcriptional activation of HOXA9. Promotes PPP1R15A-induced apoptosis. Plays a critical role in the control of circadian gene expression and is essential for the transcriptional activation mediated by the CLOCK-BMAL1 heterodimer. Establishes a permissive chromatin state for circadian transcription by mediating a rhythmic methylation of 'Lys-4' of histone H3 (H3K4me) and this histone modification directs the circadian acetylation at H3K9 and H3K14 allowing the recruitment of CLOCK-BMAL1 to chromatin. Also has auto-methylation activity on Cys-3879 in absence of histone H3 substrate. The protein is Histone-lysine N-methyltransferase 2A (Kmt2a) of Mus musculus (Mouse).